Consider the following 1038-residue polypeptide: Bone morphogenetic protein receptor type-2 (1038 aa).

The signal sequence occupies residues 1–26; that stretch reads MTSSLQRPWRVPWLPWTILLVSTAAA. Over 27–150 the chain is Extracellular; that stretch reads SQNQERLCAF…PPHSFNRDET (124 aa). Cystine bridges form between C34/C66, C60/C84, C94/C117, C99/C116, and C118/C123. N55 carries an N-linked (GlcNAc...) asparagine glycan. The N-linked (GlcNAc...) asparagine glycan is linked to N110. N126 is a glycosylation site (N-linked (GlcNAc...) asparagine). Residues 151-171 form a helical membrane-spanning segment; the sequence is IIIALASVSVLAVLIVALCFG. Residues 172-1038 lie on the Cytoplasmic side of the membrane; it reads YRMLTGDRKQ…VSKDIGMNCL (867 aa). Residues 203-504 form the Protein kinase domain; sequence LKLLELIGRG…QCAEERMAEL (302 aa). Residues 209 to 217, K230, and 280 to 282 contribute to the ATP site; these read IGRGRYGAV and EYY. Residue D333 is the Proton acceptor of the active site. ATP is bound by residues 337 to 338 and D351; that span reads RN. A Phosphothreonine modification is found at T379. S586 is modified (phosphoserine). The tract at residues 593–626 is disordered; the sequence is QAQARIPSPETSVTSLSTNTTTTNTTGLTPSTGM. Residues 603-626 are compositionally biased toward low complexity; sequence TSVTSLSTNTTTTNTTGLTPSTGM. 2 positions are modified to phosphoserine: S680 and S681. 2 disordered regions span residues 746–770 and 872–972; these read PKQQ…KEPR and RREQ…EKIK. The span at 872–896 shows a compositional bias: basic and acidic residues; that stretch reads RREQQAGHDEGVLDRLVDRRERPLE. The segment covering 937-964 has biased composition (polar residues); sequence RPNSLDLSATNVLDGSSIQIGESTQDGK.

This sequence belongs to the protein kinase superfamily. TKL Ser/Thr protein kinase family. TGFB receptor subfamily. In terms of assembly, interacts with GDF5. Interacts with BMP4. Interacts with SCUBE3. Interacts with TSC22D1/TSC-22. Interacts with activin A/INHBA. It depends on Mg(2+) as a cofactor. Mn(2+) serves as cofactor. Highly expressed in heart and liver.

The protein resides in the cell membrane. The catalysed reaction is L-threonyl-[receptor-protein] + ATP = O-phospho-L-threonyl-[receptor-protein] + ADP + H(+). It carries out the reaction L-seryl-[receptor-protein] + ATP = O-phospho-L-seryl-[receptor-protein] + ADP + H(+). In terms of biological role, on ligand binding, forms a receptor complex consisting of two type II and two type I transmembrane serine/threonine kinases. Type II receptors phosphorylate and activate type I receptors which autophosphorylate, then bind and activate SMAD transcriptional regulators. Can also mediate signaling through the activation of the p38MAPK cascade. Binds to BMP7, BMP2 and, less efficiently, BMP4. Binding is weak but enhanced by the presence of type I receptors for BMPs. Mediates induction of adipogenesis by GDF6. Promotes signaling also by binding to activin A/INHBA. The protein is Bone morphogenetic protein receptor type-2 (BMPR2) of Homo sapiens (Human).